The primary structure comprises 286 residues: Probable xyloglucan endotransglucosylase/hydrolase protein 23 (286 aa).

The signal sequence occupies residues 1 to 24 (MAMISYSTIVVALLASFMICSVSA). Positions 25-214 (NFQRDVEITW…WSKAPFTASY (190 aa)) constitute a GH16 domain. Catalysis depends on Glu-100, which acts as the Nucleophile. Glu-104 functions as the Proton donor in the catalytic mechanism. Glu-104 contributes to the xyloglucan binding site. Asn-108 is a glycosylation site (N-linked (GlcNAc...) asparagine). Xyloglucan is bound by residues 117-119 (HTN), 127-129 (DRE), 193-194 (EW), and Gly-198. Cys-222 and Cys-231 form a disulfide bridge. The N-linked (GlcNAc...) asparagine glycan is linked to Asn-233. Cys-269 and Cys-283 are disulfide-bonded. Arg-274 contributes to the xyloglucan binding site.

Belongs to the glycosyl hydrolase 16 family. XTH group 2 subfamily. Post-translationally, contains at least one intrachain disulfide bond essential for its enzymatic activity.

The protein localises to the secreted. Its subcellular location is the cell wall. It localises to the extracellular space. The protein resides in the apoplast. The enzyme catalyses breaks a beta-(1-&gt;4) bond in the backbone of a xyloglucan and transfers the xyloglucanyl segment on to O-4 of the non-reducing terminal glucose residue of an acceptor, which can be a xyloglucan or an oligosaccharide of xyloglucan.. Its function is as follows. Catalyzes xyloglucan endohydrolysis (XEH) and/or endotransglycosylation (XET). Cleaves and religates xyloglucan polymers, an essential constituent of the primary cell wall, and thereby participates in cell wall construction of growing tissues. The polypeptide is Probable xyloglucan endotransglucosylase/hydrolase protein 23 (XTH23) (Arabidopsis thaliana (Mouse-ear cress)).